The primary structure comprises 476 residues: UDP-N-acetylmuramate--L-alanine ligase (476 aa).

Gly121–Thr127 provides a ligand contact to ATP.

The protein belongs to the MurCDEF family.

Its subcellular location is the cytoplasm. The enzyme catalyses UDP-N-acetyl-alpha-D-muramate + L-alanine + ATP = UDP-N-acetyl-alpha-D-muramoyl-L-alanine + ADP + phosphate + H(+). Its pathway is cell wall biogenesis; peptidoglycan biosynthesis. In terms of biological role, cell wall formation. The sequence is that of UDP-N-acetylmuramate--L-alanine ligase from Clavibacter michiganensis subsp. michiganensis (strain NCPPB 382).